The sequence spans 594 residues: Putative lipase ATG15-1 (594 aa).

The Cytoplasmic segment spans residues Met-1–Arg-12. The chain crosses the membrane as a helical; Signal-anchor for type II membrane protein span at residues Val-13–Leu-33. Residues Pro-34–Ala-594 lie on the Lumenal side of the membrane. 5 N-linked (GlcNAc...) asparagine glycosylation sites follow: Asn-144, Asn-179, Asn-201, Asn-259, and Asn-283. The active-site Charge relay system is Ser-299. Residues Asn-432 and Asn-445 are each glycosylated (N-linked (GlcNAc...) asparagine). Residues Thr-447 to Arg-469 show a composition bias toward low complexity. Disordered regions lie at residues Thr-447 to Glu-473 and Thr-489 to Cys-509. Residues Asn-576 and Asn-582 are each glycosylated (N-linked (GlcNAc...) asparagine).

Belongs to the AB hydrolase superfamily. Lipase family. In terms of assembly, binds to both phosphatidylinositol (PI) and phosphatidylinositol 3,5-bisphosphate (PIP2).

It localises to the endosome. It is found in the multivesicular body membrane. Its subcellular location is the prevacuolar compartment membrane. The catalysed reaction is a triacylglycerol + H2O = a diacylglycerol + a fatty acid + H(+). In terms of biological role, lipase which is essential for lysis of subvacuolar cytoplasm to vacuole targeted bodies and intravacuolar autophagic bodies. Involved in the lysis of intravacuolar multivesicular body (MVB) vesicles. The intravacuolar membrane disintegration by ATG15 is critical to life span extension. This Phaeosphaeria nodorum (strain SN15 / ATCC MYA-4574 / FGSC 10173) (Glume blotch fungus) protein is Putative lipase ATG15-1 (ATG15-1).